The sequence spans 554 residues: Probable ATP-binding cassette sub-family F member 3 homolog (554 aa).

ABC transporter domains lie at 89-285 (GDLH…ASAR) and 351-554 (IEFV…GLGV). ATP contacts are provided by residues 122–129 (GRNGIGKT) and 383–390 (GANGQGKS).

The protein belongs to the ABC transporter superfamily. ABCF family. EF3 subfamily.

The chain is Probable ATP-binding cassette sub-family F member 3 homolog from Encephalitozoon cuniculi (strain GB-M1) (Microsporidian parasite).